A 1313-amino-acid chain; its full sequence is Target of rapamycin complex 1 subunit mip1 (1313 aa).

Positions 1 to 35 (MNDRISEVSGSSRARRSVLSYGTTETGSDRYTENS) are disordered. Phosphoserine occurs at positions 834, 837, and 882. WD repeat units lie at residues 986–1029 (TFNN…NSFK), 1033–1074 (SATT…KVEL), 1087–1126 (GDRN…CYAN), 1130–1170 (RSSN…RDSL), 1176–1216 (EHSS…SLQT), 1219–1259 (TDNS…NTFR), and 1268–1308 (PKPS…IHTD).

This sequence belongs to the WD repeat RAPTOR family. The target of rapamycin complex 1 (TORC1) is composed of at least mip1, pop3/wat1, tco89, toc1 and tor2.

The protein localises to the cytoplasm. Functionally, component of TORC1, which regulates multiple cellular processes to control cell growth in response to environmental signals. Tor2 is essential for growth. Nutrient limitation and environmental stress signals cause inactivation of TORC1. Active TORC1 positively controls cell growth and ribosome biogenesis by regulating ribosomal protein gene expression. TORC1 negatively controls G1 cell-cycle arrest, sexual development and amino acid uptake. Represses mating, meiosis and sporulation efficiency by interfering with the functions of the transcription factor ste11 and the meiosis-promoting RNA-binding protein mei2. The chain is Target of rapamycin complex 1 subunit mip1 from Schizosaccharomyces pombe (strain 972 / ATCC 24843) (Fission yeast).